The chain runs to 598 residues: Jacalin-related lectin 17 (598 aa).

A disordered region spans residues 1 to 23; that stretch reads MAQRLEAEGNKNFKGKSKWDDGS. Jacalin-type lectin domains are found at residues 2 to 148, 151 to 293, 295 to 445, and 452 to 595; these read AQRL…YVTW, PTKL…YFTT, PFTK…HFCP, and GEKV…HVLP.

This sequence belongs to the jacalin lectin family.

The protein is Jacalin-related lectin 17 (JAL17) of Arabidopsis thaliana (Mouse-ear cress).